Consider the following 357-residue polypeptide: Glucose-6-phosphatase catalytic subunit 1 (357 aa).

The Lumenal segment spans residues 1–28; it reads MEEGMNILHDFGIQSTRYLQVNYQDSQD. The chain crosses the membrane as a helical span at residues 29–49; the sequence is WFILVSVIADLRNAFYVLFPI. At 50-60 the chain is on the cytoplasmic side; sequence WFHLKETVGIN. The helical transmembrane segment at 61-81 threads the bilayer; that stretch reads LLWVAVVGDWFNLVFKWILFG. The Lumenal segment spans residues 82–117; sequence QRPYWWVLDTDYYSNSSVPIIKQFPVTCETGPGSPS. Substrate is bound at residue R83. An N-linked (GlcNAc...) asparagine glycan is attached at N96. Residues 118–138 form a helical membrane-spanning segment; that stretch reads GHAMGAAGVYYVMVTSTLAIF. The Proton donor role is filled by H119. The Cytoplasmic portion of the chain corresponds to 139 to 147; sequence RGKKKPTYG. Residues 148–168 form a helical membrane-spanning segment; the sequence is FRCLNVILWLGFWAVQLNVCL. At 169-179 the chain is on the lumenal side; the sequence is SRIYLAAHFPH. R170 provides a ligand contact to substrate. Residue H176 is the Nucleophile of the active site. Residues 180–202 traverse the membrane as a helical segment; it reads QVVAGVLSGIAVAETFSHIRGIY. Residues 203-211 lie on the Cytoplasmic side of the membrane; it reads NASLRKYCL. The helical transmembrane segment at 212–232 threads the bilayer; the sequence is ITIFLFGFALGFYLLLKGLGV. Over 233 to 254 the chain is Lumenal; sequence DLLWTLEKAKRWCERPEWVHLD. The chain crosses the membrane as a helical span at residues 255-275; that stretch reads TTPFASLFKNLGTLLGLGLAL. Topologically, residues 276–291 are cytoplasmic; it reads NSSMYRKSCKGELSKL. Residues 292 to 312 form a helical membrane-spanning segment; that stretch reads LPFRFACIVASLVLLHLFDSL. Residues 313 to 320 lie on the Lumenal side of the membrane; the sequence is KPPSQVEL. A helical transmembrane segment spans residues 321 to 341; it reads IFYILSFCKSATVPFASVSLI. Residues 342–357 are Cytoplasmic-facing; sequence PYCLARILGQTHKKSL. The Prevents secretion from ER signature appears at 354–357; sequence KKSL.

Belongs to the glucose-6-phosphatase family. As to expression, liver and kidney.

It is found in the endoplasmic reticulum membrane. It catalyses the reaction D-glucose 6-phosphate + H2O = D-glucose + phosphate. The protein operates within carbohydrate biosynthesis; gluconeogenesis. Its function is as follows. Hydrolyzes glucose-6-phosphate to glucose in the endoplasmic reticulum. Forms with the glucose-6-phosphate transporter (SLC37A4/G6PT) the complex responsible for glucose production in the terminal step of glycogenolysis and gluconeogenesis. Hence, it is the key enzyme in homeostatic regulation of blood glucose levels. This Mus musculus (Mouse) protein is Glucose-6-phosphatase catalytic subunit 1 (G6pc1).